The following is a 906-amino-acid chain: Protein translocase subunit SecA (906 aa).

ATP is bound by residues Gln-87, 105-109 (GEGKT), and Asp-507. The span at 553-563 (RHESRRIDNQL) shows a compositional bias: basic and acidic residues. Disordered regions lie at residues 553–576 (RHES…PGSS) and 854–906 (LEEP…GRLA). Zn(2+)-binding residues include Cys-890, Cys-892, Cys-901, and His-902. A compositionally biased stretch (basic residues) spans 896–906 (KKYKQCHGRLA).

The protein belongs to the SecA family. Monomer and homodimer. Part of the essential Sec protein translocation apparatus which comprises SecA, SecYEG and auxiliary proteins SecDF-YajC and YidC. Zn(2+) is required as a cofactor.

The protein resides in the cell inner membrane. The protein localises to the cytoplasm. The catalysed reaction is ATP + H2O + cellular proteinSide 1 = ADP + phosphate + cellular proteinSide 2.. Its function is as follows. Part of the Sec protein translocase complex. Interacts with the SecYEG preprotein conducting channel. Has a central role in coupling the hydrolysis of ATP to the transfer of proteins into and across the cell membrane, serving both as a receptor for the preprotein-SecB complex and as an ATP-driven molecular motor driving the stepwise translocation of polypeptide chains across the membrane. The protein is Protein translocase subunit SecA of Methylococcus capsulatus (strain ATCC 33009 / NCIMB 11132 / Bath).